Here is a 346-residue protein sequence, read N- to C-terminus: MAHLSRWTLSQVTELFEKPLLDLLFEAQQVHRQHFDPRQVQVSTLLSIKTGACPEDCKYCPQSARYKTGLEAERLMEVEQVLDSARKAKAAGSTRFCMGAAWKNPNDRDMPYLEQMVQGVKALGLETCMTLGTLSDDQAQRLGEAGLDYYNHNLDTSPEFYGNIITTRTYQERLDTLEKVREAGIKVCSGGIVGLGETVTDRAGLLLQLANLPTPPESVPINMLVKVKGTPLADNEDVDAFDFIRTIAVARIMMPTSYVRLSAGREQMNEQTQAMCFMAGANSIFYGCKLLTTPNPEEDKDLQLFRKLGLNPQQTAVLAGDNEQQERLEHALRDADNQQYYNAAAV.

The Radical SAM core domain occupies 38-256 (RQVQVSTLLS…IAVARIMMPT (219 aa)). 3 residues coordinate [4Fe-4S] cluster: Cys-53, Cys-57, and Cys-60. 4 residues coordinate [2Fe-2S] cluster: Cys-97, Cys-128, Cys-188, and Arg-260.

The protein belongs to the radical SAM superfamily. Biotin synthase family. Homodimer. The cofactor is [4Fe-4S] cluster. Requires [2Fe-2S] cluster as cofactor.

The catalysed reaction is (4R,5S)-dethiobiotin + (sulfur carrier)-SH + 2 reduced [2Fe-2S]-[ferredoxin] + 2 S-adenosyl-L-methionine = (sulfur carrier)-H + biotin + 2 5'-deoxyadenosine + 2 L-methionine + 2 oxidized [2Fe-2S]-[ferredoxin]. It participates in cofactor biosynthesis; biotin biosynthesis; biotin from 7,8-diaminononanoate: step 2/2. Catalyzes the conversion of dethiobiotin (DTB) to biotin by the insertion of a sulfur atom into dethiobiotin via a radical-based mechanism. This is Biotin synthase from Cronobacter sakazakii (strain ATCC BAA-894) (Enterobacter sakazakii).